The chain runs to 279 residues: Movement protein (279 aa).

The segment at 246–279 (SESEELNVESPPAAIGSSSASRSEAFRPQVVNGL) is disordered. A compositionally biased stretch (low complexity) spans 254–268 (ESPPAAIGSSSASRS).

Belongs to the cucumovirus movement protein family.

The protein resides in the host cell junction. Its subcellular location is the host plasmodesma. Its function is as follows. Transports viral genome to neighboring plant cells directly through plasmosdesmata, without any budding. The movement protein allows efficient cell to cell propagation, by bypassing the host cell wall barrier. Acts by forming a tubular structure at the host plasmodesmata, enlarging it enough to allow free passage of virion capsids. The protein is Movement protein of Cucumis sativus (Cucumber).